The following is a 156-amino-acid chain: 6,7-dimethyl-8-ribityllumazine synthase (156 aa).

Residues phenylalanine 22, 57–59, and 81–83 contribute to the 5-amino-6-(D-ribitylamino)uracil site; these read AVE and CVI. Residue 86-87 participates in (2S)-2-hydroxy-3-oxobutyl phosphate binding; that stretch reads GT. Histidine 89 (proton donor) is an active-site residue. Phenylalanine 114 contacts 5-amino-6-(D-ribitylamino)uracil. Arginine 128 is a binding site for (2S)-2-hydroxy-3-oxobutyl phosphate.

It belongs to the DMRL synthase family. Forms an icosahedral capsid composed of 60 subunits, arranged as a dodecamer of pentamers.

The catalysed reaction is (2S)-2-hydroxy-3-oxobutyl phosphate + 5-amino-6-(D-ribitylamino)uracil = 6,7-dimethyl-8-(1-D-ribityl)lumazine + phosphate + 2 H2O + H(+). The protein operates within cofactor biosynthesis; riboflavin biosynthesis; riboflavin from 2-hydroxy-3-oxobutyl phosphate and 5-amino-6-(D-ribitylamino)uracil: step 1/2. In terms of biological role, catalyzes the formation of 6,7-dimethyl-8-ribityllumazine by condensation of 5-amino-6-(D-ribitylamino)uracil with 3,4-dihydroxy-2-butanone 4-phosphate. This is the penultimate step in the biosynthesis of riboflavin. The polypeptide is 6,7-dimethyl-8-ribityllumazine synthase (Vibrio cholerae serotype O1 (strain ATCC 39315 / El Tor Inaba N16961)).